A 445-amino-acid polypeptide reads, in one-letter code: Exodeoxyribonuclease 7 large subunit (445 aa).

The protein belongs to the XseA family. As to quaternary structure, heterooligomer composed of large and small subunits.

The protein localises to the cytoplasm. It carries out the reaction Exonucleolytic cleavage in either 5'- to 3'- or 3'- to 5'-direction to yield nucleoside 5'-phosphates.. Bidirectionally degrades single-stranded DNA into large acid-insoluble oligonucleotides, which are then degraded further into small acid-soluble oligonucleotides. The polypeptide is Exodeoxyribonuclease 7 large subunit (Xanthomonas axonopodis pv. citri (strain 306)).